The chain runs to 241 residues: Triosephosphate isomerase (241 aa).

A substrate-binding site is contributed by 9–11 (NWK). Histidine 96 serves as the catalytic Electrophile. The Proton acceptor role is filled by glutamate 165. Substrate is bound by residues glycine 171, serine 204, and 225-226 (GG).

This sequence belongs to the triosephosphate isomerase family. Homodimer.

It localises to the cytoplasm. It catalyses the reaction D-glyceraldehyde 3-phosphate = dihydroxyacetone phosphate. It participates in carbohydrate biosynthesis; gluconeogenesis. It functions in the pathway carbohydrate degradation; glycolysis; D-glyceraldehyde 3-phosphate from glycerone phosphate: step 1/1. Involved in the gluconeogenesis. Catalyzes stereospecifically the conversion of dihydroxyacetone phosphate (DHAP) to D-glyceraldehyde-3-phosphate (G3P). This is Triosephosphate isomerase from Nostoc sp. (strain PCC 7120 / SAG 25.82 / UTEX 2576).